Reading from the N-terminus, the 354-residue chain is Guanine nucleotide-binding protein G(t) subunit alpha-3 (354 aa).

The segment at 1 to 27 is disordered; sequence MGSGISSESKESAKRSKELEKKLQEDA. A lipid anchor (N-myristoyl glycine) is attached at G2. Basic and acidic residues predominate over residues 8–27; sequence ESKESAKRSKELEKKLQEDA. One can recognise a G-alpha domain in the interval 32 to 354; the sequence is RTVKLLLLGA…KENLKDCGLF (323 aa). A G1 motif region spans residues 35–48; sequence KLLLLGAGESGKST. GTP contacts are provided by residues 40–47, 175–181, 200–204, 269–272, and A326; these read GAGESGKS, LHSRVKT, DVGGQ, and NKKD. Positions 47 and 181 each coordinate Mg(2+). The tract at residues 173 to 181 is G2 motif; the sequence is DVLHSRVKT. A G3 motif region spans residues 196–205; it reads FRMFDVGGQR. A G4 motif region spans residues 265 to 272; the sequence is VLFLNKKD. The segment at 324–329 is G5 motif; sequence TCATDT.

The protein belongs to the G-alpha family. G(i/o/t/z) subfamily. As to quaternary structure, g proteins are composed of 3 units; alpha, beta and gamma, respectively GNAT3, GNB1 and GNG13 for Gustducin heterotrimer for bitter taste transduction. The alpha chain contains the guanine nucleotide binding site. Component of the TAS2R14-GNAT3 complex, consisting of TAS2R14, GNAT3, GNB1 and GNG2; within the complex interacts with TAS2R14; this complex plays a role in the perception of bitterness. Gustducin heterotrimer may also be composed of GNAT3, GNB3 and GNG13. Post-translationally, potential N-myristoylation may anchor alpha-subunit to the inner surface of plasma membrane. In terms of tissue distribution, expressed in taste buds (sensory organs of clustered epithelial cells) of the circumvallate, foliate and fungiform papillae of the tongue, as well as in nasoincisor, palatal and epiglottal taste buds at protein level. Expressed in enteroendocrine of the gut, in the lumenal pole of a subset of brush cells lining the stomach and the intestine at protein level. Detected in solitary cells throughout the respiratory track. Expressed also in spermatozoa.

The protein localises to the cytoplasm. Its function is as follows. Guanine nucleotide-binding protein (G protein) alpha subunit playing a prominent role in bitter and sweet taste transduction as well as in umami (monosodium glutamate, monopotassium glutamate, and inosine monophosphate) taste transduction. Transduction by this alpha subunit involves coupling of specific cell-surface receptors with a cGMP-phosphodiesterase; Activation of phosphodiesterase lowers intracellular levels of cAMP and cGMP which may open a cyclic nucleotide-suppressible cation channel leading to influx of calcium, ultimately leading to release of neurotransmitter. Indeed, denatonium and strychnine induce transient reduction in cAMP and cGMP in taste tissue, whereas this decrease is inhibited by GNAT3 antibody. Gustducin heterotrimer transduces response to bitter and sweet compounds via regulation of phosphodiesterase for alpha subunit, as well as via activation of phospholipase C for beta and gamma subunits, with ultimate increase inositol trisphosphate and increase of intracellular Calcium. GNAT3 can functionally couple to taste receptors to transmit intracellular signal: receptor heterodimer TAS1R2/TAS1R3 senses sweetness and TAS1R1/TAS1R3 transduces umami taste, whereas the T2R family GPCRs act as bitter sensors. Also functions as lumenal sugar sensors in the gut to control the expression of the Na+-glucose transporter SGLT1 in response to dietaty sugar, as well as the secretion of Glucagon-like peptide-1, GLP-1 and glucose-dependent insulinotropic polypeptide, GIP. Thus, may modulate the gut capacity to absorb sugars, with implications for the prevention and treatment of malabsorption syndromes and diet-related disorders including diabetes and obesity. This Rattus norvegicus (Rat) protein is Guanine nucleotide-binding protein G(t) subunit alpha-3 (Gnat3).